The chain runs to 242 residues: Zinc import ATP-binding protein ZnuC (242 aa).

The ABC transporter domain occupies 24 to 241 (INVENLSFFY…EKFLKMFSSY (218 aa)). Residue 56–63 (GPNGGGKT) coordinates ATP.

It belongs to the ABC transporter superfamily. Zinc importer (TC 3.A.1.15.5) family. In terms of assembly, the complex is composed of two ATP-binding proteins (ZnuC), two transmembrane proteins (ZnuB) and a solute-binding protein (ZnuA).

Its subcellular location is the cell inner membrane. The enzyme catalyses Zn(2+)(out) + ATP(in) + H2O(in) = Zn(2+)(in) + ADP(in) + phosphate(in) + H(+)(in). Part of the ABC transporter complex ZnuABC involved in zinc import. Responsible for energy coupling to the transport system. This Ehrlichia chaffeensis (strain ATCC CRL-10679 / Arkansas) protein is Zinc import ATP-binding protein ZnuC.